Consider the following 295-residue polypeptide: Undecaprenyl-diphosphatase (295 aa).

7 helical membrane passes run 12–34 (IAIAILQGATELFPVSSLGHAVV), 50–70 (FLPFLVFLHLGTAAALLLYFW), 95–115 (IFMLLVVATLPAIVVGGLLEH), 120–140 (LFESAPIAAFFLVVNGGLLLF), 209–229 (AHFSFLIALPIILGATVLEVP), 243–263 (TAALAAVAAGITAWLSTAFLM), and 272–292 (WALKPFAFYCIIAGLGALAWL).

Belongs to the UppP family.

The protein localises to the cell inner membrane. The catalysed reaction is di-trans,octa-cis-undecaprenyl diphosphate + H2O = di-trans,octa-cis-undecaprenyl phosphate + phosphate + H(+). Functionally, catalyzes the dephosphorylation of undecaprenyl diphosphate (UPP). Confers resistance to bacitracin. In Granulibacter bethesdensis (strain ATCC BAA-1260 / CGDNIH1), this protein is Undecaprenyl-diphosphatase.